Here is a 367-residue protein sequence, read N- to C-terminus: BTB/POZ domain-containing protein Tiwaz (367 aa).

Disordered regions lie at residues 16-46 (LTVD…PRDL) and 62-87 (SSPT…SSVT). Positions 28–45 (CDMDRERERDVKALEPRD) are enriched in basic and acidic residues. Residues 135–205 (APVHIDVGGT…MRNSRLLIAE (71 aa)) enclose the BTB domain. Residues 240–261 (GNYLVAPPTPPARHIKTSPRTS) are disordered.

Functions with the transcription factor TfAP-2 to regulate octopamine neuronal signaling pathways that control behaviors such as male aggression, male mating, and the initiation of feeding. Required for TfAP-2 transcriptional activity in octopaminergic neurons. Functions with TfAP-2 to regulate expression of genes which are involved in promoting octopamine production and secretion from octopaminergic neurons, such as Tbh and Vmat. Octopamine then modulates feeding and male aggression by regulating the expression of the satiation hormone Dsk in insulin-producing cells (IPCs). Functions with octopamine and Dsk as part of a negative feedback loop to prevent overeating; acts with TfAP-2 to regulate octopamine signaling pathways that initiate feeding, then octopamine activates expression of Dsk which inhibits consummatory behavior. May also be involved in negatively regulating nociception in larvae to prevent spontaneous pain and hyperalgesia. This Drosophila melanogaster (Fruit fly) protein is BTB/POZ domain-containing protein Tiwaz.